The following is a 249-amino-acid chain: 5'-nucleotidase SurE (249 aa).

A divalent metal cation-binding residues include D8, D9, S39, and N91.

Belongs to the SurE nucleotidase family. The cofactor is a divalent metal cation.

The protein localises to the cytoplasm. It catalyses the reaction a ribonucleoside 5'-phosphate + H2O = a ribonucleoside + phosphate. In terms of biological role, nucleotidase that shows phosphatase activity on nucleoside 5'-monophosphates. The sequence is that of 5'-nucleotidase SurE from Vesicomyosocius okutanii subsp. Calyptogena okutanii (strain HA).